A 41-amino-acid chain; its full sequence is Large ribosomal subunit protein bL36 (41 aa).

It belongs to the bacterial ribosomal protein bL36 family.

The chain is Large ribosomal subunit protein bL36 from Rhizobium etli (strain CIAT 652).